The primary structure comprises 448 residues: Eukaryotic translation initiation factor 3 subunit E (448 aa).

One can recognise a PCI domain in the interval Thr254–Gln423.

It belongs to the eIF-3 subunit E family. In terms of assembly, component of the eukaryotic translation initiation factor 3 (eIF-3) complex.

The protein resides in the cytoplasm. In terms of biological role, component of the eukaryotic translation initiation factor 3 (eIF-3) complex, which is involved in protein synthesis of a specialized repertoire of mRNAs and, together with other initiation factors, stimulates binding of mRNA and methionyl-tRNAi to the 40S ribosome. The eIF-3 complex specifically targets and initiates translation of a subset of mRNAs involved in cell proliferation. This Emericella nidulans (strain FGSC A4 / ATCC 38163 / CBS 112.46 / NRRL 194 / M139) (Aspergillus nidulans) protein is Eukaryotic translation initiation factor 3 subunit E (int6).